Here is a 339-residue protein sequence, read N- to C-terminus: Anthranilate phosphoribosyltransferase (339 aa).

Residues glycine 79, 82 to 83, threonine 87, 89 to 92, 107 to 115, and serine 119 contribute to the 5-phospho-alpha-D-ribose 1-diphosphate site; these read GD, NIST, and KHGNRAVSS. Glycine 79 contributes to the anthranilate binding site. Serine 91 is a binding site for Mg(2+). Asparagine 110 contacts anthranilate. Residue arginine 165 coordinates anthranilate. Positions 224 and 225 each coordinate Mg(2+).

This sequence belongs to the anthranilate phosphoribosyltransferase family. In terms of assembly, homodimer. Mg(2+) is required as a cofactor.

The catalysed reaction is N-(5-phospho-beta-D-ribosyl)anthranilate + diphosphate = 5-phospho-alpha-D-ribose 1-diphosphate + anthranilate. It participates in amino-acid biosynthesis; L-tryptophan biosynthesis; L-tryptophan from chorismate: step 2/5. Catalyzes the transfer of the phosphoribosyl group of 5-phosphorylribose-1-pyrophosphate (PRPP) to anthranilate to yield N-(5'-phosphoribosyl)-anthranilate (PRA). This is Anthranilate phosphoribosyltransferase from Geobacillus thermodenitrificans (strain NG80-2).